An 881-amino-acid polypeptide reads, in one-letter code: Envelope glycoprotein gp160 (881 aa).

A signal peptide spans 1-22; the sequence is MGCLKNQLLIAILLLSVYGIYC. Over 23 to 696 the chain is Extracellular; it reads TQYVTVFYGV…ASWIKYIQYG (674 aa). Asparagine 37 is a glycosylation site (N-linked (GlcNAc...) asparagine; by host). A disulfide bridge links cysteine 44 with cysteine 57. 18 N-linked (GlcNAc...) asparagine; by host glycosylation sites follow: asparagine 70, asparagine 114, asparagine 148, asparagine 158, asparagine 173, asparagine 186, asparagine 200, asparagine 204, asparagine 214, asparagine 246, asparagine 249, asparagine 280, asparagine 286, asparagine 297, asparagine 308, asparagine 318, asparagine 373, and asparagine 379. 5 disulfides stabilise this stretch: cysteine 101/cysteine 222, cysteine 108/cysteine 213, cysteine 113/cysteine 170, cysteine 235/cysteine 265, and cysteine 245/cysteine 257. The interval 113–169 is V1; it reads CNKSETDRWGLTKSSTTITTAAPTSAPVSEKLDMVNETSSCIAQNNCTGLEQEQMIS. A V2 region spans residues 170 to 213; that stretch reads CKFNMTGLKRDKTKEYNETWYSTDLVCEQRNSTDNESRCYMNHC. The interval 313 to 345 is V3; the sequence is CRRPGNKTVLPVTIMSELVFHSQPINDRPKQAW. An intrachain disulfide couples cysteine 313 to cysteine 346. 2 cysteine pairs are disulfide-bonded: cysteine 397-cysteine 461 and cysteine 404-cysteine 434. Positions 404 to 434 are V4; it reads CKMNWFLNWVEDKDVTTQRPKERHRKNYVPC. 2 N-linked (GlcNAc...) asparagine; by host glycosylation sites follow: asparagine 462 and asparagine 478. The V5 stretch occupies residues 477–484; sequence GNQTSITM. The interval 528–548 is fusion peptide; it reads GVFVLGFLGFLATAGSAIGAV. The interval 591 to 607 is immunosuppression; that stretch reads LQTKVTAIEKYLKDQAQ. 3 N-linked (GlcNAc...) asparagine; by host glycosylation sites follow: asparagine 627, asparagine 636, and asparagine 652. Positions 636 to 668 form a coiled coil; sequence NDTWQEWERKVDFLEENITALLEEAQIQQEKNM. An MPER; binding to GalCer region spans residues 673–694; sequence KLNSWDVFGNWFDLASWIKYIQ. A helical transmembrane segment spans residues 697-717; the sequence is IYVVVGVILLRIVIYIVQMLA. The Cytoplasmic portion of the chain corresponds to 718–881; the sequence is KLRQGYRPVF…IRQGLELTLL (164 aa). The YXXV motif; contains endocytosis signal signature appears at 723 to 726; sequence YRPV. The interval 737–761 is disordered; it reads THTQQDPALPTREGKEGDGGEGGGN. Residue cysteine 789 is the site of S-palmitoyl cysteine; by host attachment. The short motif at 880–881 is the Di-leucine internalization motif element; sequence LL.

The mature envelope protein (Env) consists of a homotrimer of non-covalently associated gp120-gp41 heterodimers. The resulting complex protrudes from the virus surface as a spike. Interacts with host CD4 and CCR5. Gp120 also interacts with the C-type lectins CD209/DC-SIGN and CLEC4M/DC-SIGNR (collectively referred to as DC-SIGN(R)). In terms of assembly, the mature envelope protein (Env) consists of a homotrimer of non-covalently associated gp120-gp41 heterodimers. The resulting complex protrudes from the virus surface as a spike. Specific enzymatic cleavages in vivo yield mature proteins. Envelope glycoproteins are synthesized as an inactive precursor that is heavily N-glycosylated and processed likely by host cell furin in the Golgi to yield the mature SU and TM proteins. The cleavage site between SU and TM requires the minimal sequence [KR]-X-[KR]-R. In terms of processing, palmitoylation of the transmembrane protein and of Env polyprotein (prior to its proteolytic cleavage) is essential for their association with host cell membrane lipid rafts. Palmitoylation is therefore required for envelope trafficking to classical lipid rafts, but not for viral replication.

The protein localises to the virion membrane. It localises to the host cell membrane. Its subcellular location is the host endosome membrane. Functionally, the surface protein gp120 (SU) attaches the virus to the host lymphoid cell by binding to the primary receptor CD4. This interaction induces a structural rearrangement creating a high affinity binding site for a chemokine coreceptor like CCR5. This peculiar 2 stage receptor-interaction strategy allows gp120 to maintain the highly conserved coreceptor-binding site in a cryptic conformation, protected from neutralizing antibodies. These changes are transmitted to the transmembrane protein gp41 and are thought to activate its fusogenic potential by unmasking its fusion peptide. Surface protein gp120 (SU) may target the virus to gut-associated lymphoid tissue (GALT) by binding host ITGA4/ITGB7 (alpha-4/beta-7 integrins), a complex that mediates T-cell migration to the GALT. Interaction between gp120 and ITGA4/ITGB7 would allow the virus to enter GALT early in the infection, infecting and killing most of GALT's resting CD4+ T-cells. This T-cell depletion is believed to be the major insult to the host immune system leading to AIDS. In terms of biological role, the surface protein gp120 is a ligand for CD209/DC-SIGN and CLEC4M/DC-SIGNR, which are respectively found on dendritic cells (DCs), and on endothelial cells of liver sinusoids and lymph node sinuses. These interactions allow capture of viral particles at mucosal surfaces by these cells and subsequent transmission to permissive cells. DCs are professional antigen presenting cells, critical for host immunity by inducing specific immune responses against a broad variety of pathogens. They act as sentinels in various tissues where they take up antigen, process it, and present it to T-cells following migration to lymphoid organs. SIV subverts the migration properties of dendritic cells to gain access to CD4+ T-cells in lymph nodes. Virus transmission to permissive T-cells occurs either in trans (without DCs infection, through viral capture and transmission), or in cis (following DCs productive infection, through the usual CD4-gp120 interaction), thereby inducing a robust infection. In trans infection, bound virions remain infectious over days and it is proposed that they are not degraded, but protected in non-lysosomal acidic organelles within the DCs close to the cell membrane thus contributing to the viral infectious potential during DCs' migration from the periphery to the lymphoid tissues. On arrival at lymphoid tissues, intact virions recycle back to DCs' cell surface allowing virus transmission to CD4+ T-cells. Virion capture also seems to lead to MHC-II-restricted viral antigen presentation, and probably to the activation of SIV-specific CD4+ cells. Its function is as follows. The transmembrane protein gp41 (TM) acts as a class I viral fusion protein. Under the current model, the protein has at least 3 conformational states: pre-fusion native state, pre-hairpin intermediate state, and post-fusion hairpin state. During fusion of viral and target intracellular membranes, the coiled coil regions (heptad repeats) assume a trimer-of-hairpins structure, positioning the fusion peptide in close proximity to the C-terminal region of the ectodomain. The formation of this structure appears to drive apposition and subsequent fusion of viral and target cell membranes. Complete fusion occurs in host cell endosomes. The virus undergoes clathrin-dependent internalization long before endosomal fusion, thus minimizing the surface exposure of conserved viral epitopes during fusion and reducing the efficacy of inhibitors targeting these epitopes. Membranes fusion leads to delivery of the nucleocapsid into the cytoplasm. Functionally, the envelope glycoprotein gp160 precursor down-modulates cell surface CD4 antigen by interacting with it in the endoplasmic reticulum and blocking its transport to the cell surface. The gp120-gp41 heterodimer allows rapid transcytosis of the virus through CD4 negative cells such as simple epithelial monolayers of the intestinal, rectal and endocervical epithelial barriers. Both gp120 and gp41 specifically recognize glycosphingolipids galactosyl-ceramide (GalCer) or 3' sulfo-galactosyl-ceramide (GalS) present in the lipid rafts structures of epithelial cells. Binding to these alternative receptors allows the rapid transcytosis of the virus through the epithelial cells. This transcytotic vesicle-mediated transport of virions from the apical side to the basolateral side of the epithelial cells does not involve infection of the cells themselves. In Simian immunodeficiency virus (isolate K78) (SIV-mac), this protein is Envelope glycoprotein gp160 (env).